Consider the following 389-residue polypeptide: Chalcone synthase J (389 aa).

The active site involves Cys-164.

Belongs to the thiolase-like superfamily. Chalcone/stilbene synthases family.

It carries out the reaction (E)-4-coumaroyl-CoA + 3 malonyl-CoA + 3 H(+) = 2',4,4',6'-tetrahydroxychalcone + 3 CO2 + 4 CoA. The protein operates within secondary metabolite biosynthesis; flavonoid biosynthesis. The primary product of this enzyme is 4,2',4',6'-tetrahydroxychalcone (also termed naringenin-chalcone or chalcone) which can under specific conditions spontaneously isomerize into naringenin. This Petunia hybrida (Petunia) protein is Chalcone synthase J (CHSJ).